The primary structure comprises 286 residues: Shikimate dehydrogenase (NADP(+)) (286 aa).

Residues 19–21 (SFS) and Thr66 contribute to the shikimate site. The active-site Proton acceptor is the Lys70. Shikimate-binding residues include Asn91 and Asp107. NADP(+) contacts are provided by residues 129-133 (GSGGA) and Leu229. Tyr231 contacts shikimate. Gly252 provides a ligand contact to NADP(+).

The protein belongs to the shikimate dehydrogenase family. In terms of assembly, homodimer.

The enzyme catalyses shikimate + NADP(+) = 3-dehydroshikimate + NADPH + H(+). It functions in the pathway metabolic intermediate biosynthesis; chorismate biosynthesis; chorismate from D-erythrose 4-phosphate and phosphoenolpyruvate: step 4/7. Functionally, involved in the biosynthesis of the chorismate, which leads to the biosynthesis of aromatic amino acids. Catalyzes the reversible NADPH linked reduction of 3-dehydroshikimate (DHSA) to yield shikimate (SA). The polypeptide is Shikimate dehydrogenase (NADP(+)) (Prochlorococcus marinus (strain MIT 9301)).